A 260-amino-acid polypeptide reads, in one-letter code: GDNF family receptor alpha-4 (260 aa).

Residues Met-1–Gly-23 form the signal peptide. Asn-184 carries an N-linked (GlcNAc...) asparagine glycan. Thr-237 carries the GPI-anchor amidated threonine lipid modification. Positions Ala-238 to Leu-260 are cleaved as a propeptide — removed in mature form.

This sequence belongs to the GDNFR family. As to quaternary structure, interacts with ARTN ligand and RET: forms a 2:2:2 ternary complex composed of ARTN ligand, GFRA3 and RET receptor. Interacts with SORL1. As to expression, expressed in many tissues including adrenal medulla, brain neurons, with highest levels in the cerebral cortex and hippocampus. Moderate levels found in the gut circular muscle and myenteric ganglia as well as in other peripheral ganglia, including the sensory dorsal root and trigeminal as well as superior cervical and sympathetic chain ganglia. Isoform a1, isoform a2, isoform b1 and isoform b2 are exclusively found in the thyroid, parthyroid and pituitary glands.

Its subcellular location is the cell membrane. It localises to the secreted. Its function is as follows. Receptor for persephin (PSPN), a growth factor that exhibits neurotrophic activity on mesencephalic dopaminergic and motor neurons. Acts by binding to its coreceptor, GFRA4, leading to autophosphorylation and activation of the RET receptor. May be important in C-cell development and, in the postnatal development of the adrenal medulla. The chain is GDNF family receptor alpha-4 (Gfra4) from Mus musculus (Mouse).